The following is a 249-amino-acid chain: 5'-nucleotidase SurE 2 (249 aa).

4 residues coordinate a divalent metal cation: Asp-8, Asp-9, Ser-40, and Asn-90.

Belongs to the SurE nucleotidase family. A divalent metal cation serves as cofactor.

The protein resides in the cytoplasm. The enzyme catalyses a ribonucleoside 5'-phosphate + H2O = a ribonucleoside + phosphate. Its function is as follows. Nucleotidase that shows phosphatase activity on nucleoside 5'-monophosphates. The chain is 5'-nucleotidase SurE 2 from Pyrobaculum aerophilum (strain ATCC 51768 / DSM 7523 / JCM 9630 / CIP 104966 / NBRC 100827 / IM2).